Reading from the N-terminus, the 1224-residue chain is ATP-dependent helicase/nuclease subunit A (1224 aa).

The UvrD-like helicase ATP-binding domain maps to 15 to 480 (VIWTDAQWQS…IDLSQNFRSR (466 aa)). 36-43 (AAAGSGKT) provides a ligand contact to ATP. The region spanning 497-791 (EQVGEISYDD…RMMTIHSSKG (295 aa)) is the UvrD-like helicase C-terminal domain.

It belongs to the helicase family. AddA subfamily. Heterodimer of AddA and AddB/RexB. Requires Mg(2+) as cofactor.

It catalyses the reaction Couples ATP hydrolysis with the unwinding of duplex DNA by translocating in the 3'-5' direction.. It carries out the reaction ATP + H2O = ADP + phosphate + H(+). Its function is as follows. The heterodimer acts as both an ATP-dependent DNA helicase and an ATP-dependent, dual-direction single-stranded exonuclease. Recognizes the chi site generating a DNA molecule suitable for the initiation of homologous recombination. The AddA nuclease domain is required for chi fragment generation; this subunit has the helicase and 3' -&gt; 5' nuclease activities. The chain is ATP-dependent helicase/nuclease subunit A from Staphylococcus epidermidis (strain ATCC 12228 / FDA PCI 1200).